Reading from the N-terminus, the 235-residue chain is uncharacterized protein (235 aa).

It belongs to the UreF family.

It localises to the cytoplasm. It is found in the nucleus. Probably facilitates nickel incorporation. This is an uncharacterized protein from Schizosaccharomyces pombe (strain 972 / ATCC 24843) (Fission yeast).